Consider the following 154-residue polypeptide: Protein X (154 aa).

Positions 68-117 (PCALRFTSARRMETTVNAHQILPKVLHKRTLGLSAMSTTDLEAYFKACLF) are mitochondrial targeting sequence.

It belongs to the orthohepadnavirus protein X family. In terms of assembly, may form homodimer. May interact with host CEBPA, CFLAR, CREB1, DDB1, E4F1, HBXIP, HSPD1/HSP60, NFKBIA, POLR2E and SMAD4. Interacts with host SMC5-SMC6 complex and induces its degradation. Interacts with host TRPC4AP; leading to prevent ubiquitination of TRPC4AP. Interacts with host PLSCR1; this interaction promotes ubiquitination and degradation of HBx and impairs HBx-mediated cell proliferation. Post-translationally, a fraction may be phosphorylated in insect cells and HepG2 cells, a human hepatoblastoma cell line. Phosphorylated in vitro by host protein kinase C or mitogen-activated protein kinase. N-acetylated in insect cells.

It is found in the host cytoplasm. Its subcellular location is the host nucleus. The protein resides in the host mitochondrion. Its function is as follows. Multifunctional protein that plays a role in silencing host antiviral defenses and promoting viral transcription. Does not seem to be essential for HBV infection. May be directly involved in development of cirrhosis and liver cancer (hepatocellular carcinoma). Most of cytosolic activities involve modulation of cytosolic calcium. The effect on apoptosis is controversial depending on the cell types in which the studies have been conducted. May induce apoptosis by localizing in mitochondria and causing loss of mitochondrial membrane potential. May also modulate apoptosis by binding host CFLAR, a key regulator of the death-inducing signaling complex (DISC). Promotes viral transcription by using the host E3 ubiquitin ligase DDB1 to target the SMC5-SMC6 complex to proteasomal degradation. This host complex would otherwise bind to viral episomal DNA, and prevents its transcription. Moderately stimulates transcription of many different viral and cellular transcription elements. Promoters and enhancers stimulated by HBx contain DNA binding sites for NF-kappa-B, AP-1, AP-2, c-EBP, ATF/CREB, or the calcium-activated factor NF-AT. The sequence is that of Protein X from Hepatitis B virus genotype E (isolate Cote d'Ivoire/ABI-129/2003) (HBV-E).